A 361-amino-acid polypeptide reads, in one-letter code: Mitochondrial fission regulator 2 (361 aa).

At Ser-137 the chain carries Phosphoserine. Disordered regions lie at residues 191–286 and 298–322; these read FIDL…VPNM and LRPVERSPGGRPVQKRKRRSSEWDP. A compositionally biased stretch (pro residues) spans 219-231; it reads VLPPPPPPPPPPQ. Residues 232–244 are compositionally biased toward low complexity; sequence FSLQPPSSLPMQP. Basic and acidic residues predominate over residues 250–282; the sequence is HDIDSLATEMERQLSGVKKTDDSHHSKSQRLRD. Phosphoserine is present on residues Ser-304 and Ser-340.

Belongs to the MTFR1 family. As to expression, expressed predominantly in testis (at protein level). Expressed to a lower extent in spleen.

The protein localises to the mitochondrion. May play a role in mitochondrial aerobic respiration essentially in the testis. Can also promote mitochondrial fission. The sequence is that of Mitochondrial fission regulator 2 (Mtfr2) from Mus musculus (Mouse).